Consider the following 447-residue polypeptide: MSNILQSVPVNQKVGIAFSGGLDTSAALHWMRQKGAIPYAYTANLGQPDETDYNAIPEKAKAYGAELARLIDCREQLVAEGIAALQSGAFHISTAGVTYFNTTPLGRAVTGTMLVAAMKEDNVDIWGDGSTFKGNDIERFYRYGLLMNPALRIYKPWLDDTFIQELGGRKEMSEFLIKSGFDYKMSVEKAYSTDSNILGATHEAKDLEELSSGMKIVQPIMGVAFWRDDVEVKREEVTVRFEEGRPVALNGVVYSDLVELMLEANRIGGRHGLGMSDQIENRIIEAKSRGIYEAPGLALLFIAYERLVTGIHNEDTIEQYRESGRRLGRLLYQGRWFDPQAIMLREAAQRWVARAITGEVTIELRRGNDYSILNTVSANLTYAPERLSMEKVEDAPFSPADRIGQLTMRNLDITDTRQKLGIYNDVGLLTGNTSVALPRIGKDSDKK.

ATP contacts are provided by residues 17–25 and A43; that span reads AFSGGLDTS. Y99 contributes to the L-citrulline binding site. Positions 129 and 131 each coordinate ATP. L-aspartate contacts are provided by T131, N135, and D136. N135 is a binding site for L-citrulline. D136 lines the ATP pocket. Positions 139 and 192 each coordinate L-citrulline. D194 lines the ATP pocket. Residues T201, E203, and E280 each contribute to the L-citrulline site.

It belongs to the argininosuccinate synthase family. Type 2 subfamily. Homotetramer.

It is found in the cytoplasm. The catalysed reaction is L-citrulline + L-aspartate + ATP = 2-(N(omega)-L-arginino)succinate + AMP + diphosphate + H(+). The protein operates within amino-acid biosynthesis; L-arginine biosynthesis; L-arginine from L-ornithine and carbamoyl phosphate: step 2/3. This Janthinobacterium sp. (strain Marseille) (Minibacterium massiliensis) protein is Argininosuccinate synthase.